A 323-amino-acid chain; its full sequence is L-lactate dehydrogenase 1 (323 aa).

NAD(+) contacts are provided by residues Val-18, Asp-39, Tyr-69, and Gly-83–Ala-84. The substrate site is built by Gln-86 and Arg-92. NAD(+)-binding positions include Ser-105, Val-122–Asn-124, and Ser-147. Substrate is bound at residue Asn-124–Asp-127. Asp-152–Arg-155 is a substrate binding site. His-179 (proton acceptor) is an active-site residue. Tyr-223 carries the post-translational modification Phosphotyrosine. A substrate-binding site is contributed by Thr-232.

It belongs to the LDH/MDH superfamily. LDH family. As to quaternary structure, homotetramer.

The protein resides in the cytoplasm. It carries out the reaction (S)-lactate + NAD(+) = pyruvate + NADH + H(+). The protein operates within fermentation; pyruvate fermentation to lactate; (S)-lactate from pyruvate: step 1/1. Its function is as follows. Catalyzes the conversion of lactate to pyruvate. This is L-lactate dehydrogenase 1 from Lactobacillus acidophilus (strain ATCC 700396 / NCK56 / N2 / NCFM).